A 332-amino-acid chain; its full sequence is UPF0194 membrane protein YbhG (332 aa).

The N-terminal stretch at 1–16 is a signal peptide; the sequence is MMKKPVVIGLAVVVLA. Positions 108 to 209 form a coiled coil; the sequence is EEIAQAAAAV…LNLQDSTLIA (102 aa).

The protein belongs to the UPF0194 family.

It localises to the periplasm. The sequence is that of UPF0194 membrane protein YbhG from Escherichia coli O127:H6 (strain E2348/69 / EPEC).